A 336-amino-acid chain; its full sequence is Formimidoylglutamase (336 aa).

Residues 1–10 (MNPNFTTEHT) show a composition bias toward polar residues. Residues 1–22 (MNPNFTTEHTWQGRHDPEDGQA) form a disordered region. Basic and acidic residues predominate over residues 11–22 (WQGRHDPEDGQA). Residues H127, D157, H159, D161, D254, and D256 each contribute to the Mn(2+) site.

Belongs to the arginase family. The cofactor is Mn(2+).

The enzyme catalyses N-formimidoyl-L-glutamate + H2O = formamide + L-glutamate. It participates in amino-acid degradation; L-histidine degradation into L-glutamate; L-glutamate from N-formimidoyl-L-glutamate (hydrolase route): step 1/1. Its function is as follows. Catalyzes the conversion of N-formimidoyl-L-glutamate to L-glutamate and formamide. The sequence is that of Formimidoylglutamase from Vibrio cholerae serotype O1 (strain ATCC 39541 / Classical Ogawa 395 / O395).